A 622-amino-acid polypeptide reads, in one-letter code: Low affinity potassium transport system protein Kup (622 aa).

12 helical membrane-spanning segments follow: residues L9–L29, V49–L69, V103–I123, P137–I157, V165–L185, V213–A233, W247–L267, P276–A296, I337–F357, L363–T383, F396–L416, and L419–T439.

Belongs to the HAK/KUP transporter (TC 2.A.72) family.

Its subcellular location is the cell inner membrane. It carries out the reaction K(+)(in) + H(+)(in) = K(+)(out) + H(+)(out). Functionally, responsible for the low-affinity transport of potassium into the cell. Likely operates as a K(+):H(+) symporter. This chain is Low affinity potassium transport system protein Kup, found in Citrobacter koseri (strain ATCC BAA-895 / CDC 4225-83 / SGSC4696).